The primary structure comprises 432 residues: Adenylosuccinate synthetase (432 aa).

GTP contacts are provided by residues 12–18 (GDEGKGK) and 40–42 (GHT). Catalysis depends on D13, which acts as the Proton acceptor. 2 residues coordinate Mg(2+): D13 and G40. Residues 13 to 16 (DEGK), 38 to 41 (NAGH), T130, R144, Q225, T240, and R304 contribute to the IMP site. Residue H41 is the Proton donor of the active site. Position 300-306 (300-306 (ATTGRPR)) interacts with substrate. GTP-binding positions include R306, 332–334 (KLD), and 414–416 (SVG).

It belongs to the adenylosuccinate synthetase family. In terms of assembly, homodimer. Requires Mg(2+) as cofactor.

It localises to the cytoplasm. It carries out the reaction IMP + L-aspartate + GTP = N(6)-(1,2-dicarboxyethyl)-AMP + GDP + phosphate + 2 H(+). It participates in purine metabolism; AMP biosynthesis via de novo pathway; AMP from IMP: step 1/2. Plays an important role in the de novo pathway of purine nucleotide biosynthesis. Catalyzes the first committed step in the biosynthesis of AMP from IMP. The chain is Adenylosuccinate synthetase from Anaeromyxobacter sp. (strain K).